The primary structure comprises 507 residues: UDP-N-acetylhexosamine pyrophosphorylase-like protein 1 (507 aa).

The Substrate binding motif lies at 111 to 114; the sequence is LAGG. UTP is bound by residues 111-114, lysine 125, glutamine 199, and glycine 225; that span reads LAGG. Asparagine 226 contacts substrate. Aspartate 256 is a binding site for UTP. A Substrate binding motif is present at residues 306–307; the sequence is EY. Residue lysine 380 coordinates UTP. A substrate-binding site is contributed by lysine 410.

It belongs to the UDPGP type 1 family.

This chain is UDP-N-acetylhexosamine pyrophosphorylase-like protein 1 (Uap1l1), found in Mus musculus (Mouse).